A 337-amino-acid chain; its full sequence is Phenylalanine--tRNA ligase alpha subunit (337 aa).

Residue glutamate 258 coordinates Mg(2+).

Belongs to the class-II aminoacyl-tRNA synthetase family. Phe-tRNA synthetase alpha subunit type 1 subfamily. As to quaternary structure, tetramer of two alpha and two beta subunits. Mg(2+) serves as cofactor.

It is found in the cytoplasm. The catalysed reaction is tRNA(Phe) + L-phenylalanine + ATP = L-phenylalanyl-tRNA(Phe) + AMP + diphosphate + H(+). In Burkholderia cenocepacia (strain ATCC BAA-245 / DSM 16553 / LMG 16656 / NCTC 13227 / J2315 / CF5610) (Burkholderia cepacia (strain J2315)), this protein is Phenylalanine--tRNA ligase alpha subunit.